The following is a 134-amino-acid chain: Ribosome-binding factor A (134 aa).

Belongs to the RbfA family. Monomer. Binds 30S ribosomal subunits, but not 50S ribosomal subunits or 70S ribosomes.

Its subcellular location is the cytoplasm. In terms of biological role, one of several proteins that assist in the late maturation steps of the functional core of the 30S ribosomal subunit. Associates with free 30S ribosomal subunits (but not with 30S subunits that are part of 70S ribosomes or polysomes). Required for efficient processing of 16S rRNA. May interact with the 5'-terminal helix region of 16S rRNA. This chain is Ribosome-binding factor A, found in Tolumonas auensis (strain DSM 9187 / NBRC 110442 / TA 4).